The sequence spans 392 residues: Casein kinase II subunit alpha (392 aa).

The Protein kinase domain occupies 39 to 324; sequence YQLVRKLGRG…AREAMDHPYF (286 aa). Residues 45–53 and K68 each bind ATP; that span reads LGRGKYSEV. Residue D156 is the Proton acceptor of the active site. The interval 334 to 355 is disordered; it reads MGGSNMPSGSSTPVSSASMMSG. The segment covering 337-354 has biased composition (low complexity); it reads SNMPSGSSTPVSSASMMS.

The protein belongs to the protein kinase superfamily. Ser/Thr protein kinase family. CK2 subfamily. As to quaternary structure, tetramer composed of an alpha chain, an alpha' and two beta chains.

The protein localises to the nucleus. The catalysed reaction is L-seryl-[protein] + ATP = O-phospho-L-seryl-[protein] + ADP + H(+). The enzyme catalyses L-threonyl-[protein] + ATP = O-phospho-L-threonyl-[protein] + ADP + H(+). Functionally, catalytic subunit of a constitutively active serine/threonine-protein kinase complex that phosphorylates a large number of substrates containing acidic residues C-terminal to the phosphorylated serine or threonine. Regulates numerous cellular processes, such as cell cycle progression, apoptosis and transcription, as well as viral infection. May act as a regulatory node which integrates and coordinates numerous signals leading to an appropriate cellular response. During mitosis, functions as a component of the p53/TP53-dependent spindle assembly checkpoint (SAC) that maintains cyclin-B-CDK1 activity and G2 arrest in response to spindle damage. Can also negatively regulate apoptosis. Phosphorylates the caspases CASP9 and CASP2 and the apoptotic regulator NOL3. Phosphorylation protects CASP9 from cleavage and activation by CASP8, and inhibits the dimerization of CASP2 and activation of CASP8. Plays an important role in the circadian clock function by phosphorylating BMAL1. The protein is Casein kinase II subunit alpha (csnk2a1) of Xenopus laevis (African clawed frog).